The chain runs to 340 residues: Uroporphyrinogen decarboxylase (340 aa).

Substrate is bound by residues 23 to 27 (RQAGR), aspartate 72, tyrosine 147, threonine 202, and histidine 316.

The protein belongs to the uroporphyrinogen decarboxylase family. Homodimer.

It is found in the cytoplasm. The catalysed reaction is uroporphyrinogen III + 4 H(+) = coproporphyrinogen III + 4 CO2. It functions in the pathway porphyrin-containing compound metabolism; protoporphyrin-IX biosynthesis; coproporphyrinogen-III from 5-aminolevulinate: step 4/4. Catalyzes the decarboxylation of four acetate groups of uroporphyrinogen-III to yield coproporphyrinogen-III. This chain is Uroporphyrinogen decarboxylase, found in Pelobacter propionicus (strain DSM 2379 / NBRC 103807 / OttBd1).